The primary structure comprises 313 residues: D-alanine--D-alanine ligase (313 aa).

The 197-residue stretch at 107-303 (KQAFAAAGLT…FEALVEQIAC (197 aa)) folds into the ATP-grasp domain. 135 to 188 (PFGLPVVVKPVQEGSSVGVTIVKKPEDLQAALDEAFRYDTLVLVEKYIKGQEVQ) lines the ATP pocket. Residues aspartate 256, glutamate 269, and asparagine 271 each contribute to the Mg(2+) site.

The protein belongs to the D-alanine--D-alanine ligase family. Mg(2+) serves as cofactor. Mn(2+) is required as a cofactor.

The protein localises to the cytoplasm. It catalyses the reaction 2 D-alanine + ATP = D-alanyl-D-alanine + ADP + phosphate + H(+). Its pathway is cell wall biogenesis; peptidoglycan biosynthesis. In terms of biological role, cell wall formation. The sequence is that of D-alanine--D-alanine ligase from Trichlorobacter lovleyi (strain ATCC BAA-1151 / DSM 17278 / SZ) (Geobacter lovleyi).